A 140-amino-acid chain; its full sequence is ATP synthase epsilon chain (140 aa).

The protein belongs to the ATPase epsilon chain family. In terms of assembly, F-type ATPases have 2 components, CF(1) - the catalytic core - and CF(0) - the membrane proton channel. CF(1) has five subunits: alpha(3), beta(3), gamma(1), delta(1), epsilon(1). CF(0) has three main subunits: a, b and c.

The protein resides in the cell membrane. In terms of biological role, produces ATP from ADP in the presence of a proton gradient across the membrane. The chain is ATP synthase epsilon chain (atpC) from Enterococcus hirae (strain ATCC 9790 / DSM 20160 / JCM 8729 / LMG 6399 / NBRC 3181 / NCIMB 6459 / NCDO 1258 / NCTC 12367 / WDCM 00089 / R).